A 459-amino-acid chain; its full sequence is Putrescine aminotransferase (459 aa).

Pyridoxal 5'-phosphate is bound by residues 150-151 (GT) and Gln274. Lys300 is subject to N6-(pyridoxal phosphate)lysine. Thr332 lines the pyridoxal 5'-phosphate pocket.

It belongs to the class-III pyridoxal-phosphate-dependent aminotransferase family. Putrescine aminotransferase subfamily. Requires pyridoxal 5'-phosphate as cofactor.

The catalysed reaction is an alkane-alpha,omega-diamine + 2-oxoglutarate = an omega-aminoaldehyde + L-glutamate. It carries out the reaction putrescine + 2-oxoglutarate = 1-pyrroline + L-glutamate + H2O. It catalyses the reaction cadaverine + 2-oxoglutarate = 5-aminopentanal + L-glutamate. Its pathway is amine and polyamine degradation; putrescine degradation; 4-aminobutanal from putrescine (transaminase route): step 1/1. Catalyzes the aminotransferase reaction from putrescine to 2-oxoglutarate, leading to glutamate and 4-aminobutanal, which spontaneously cyclizes to form 1-pyrroline. This is the first step in one of two pathways for putrescine degradation, where putrescine is converted into 4-aminobutanoate (gamma-aminobutyrate or GABA) via 4-aminobutanal. Also functions as a cadaverine transaminase in a a L-lysine degradation pathway to succinate that proceeds via cadaverine, glutarate and L-2-hydroxyglutarate. The protein is Putrescine aminotransferase of Escherichia coli O7:K1 (strain IAI39 / ExPEC).